The chain runs to 225 residues: Ribonuclease 3 (225 aa).

One can recognise an RNase III domain in the interval 5–127 (IEKLTRQLGY…IIGAVYLDSD (123 aa)). A Mg(2+)-binding site is contributed by Glu40. The active site involves Asp44. Residues Asp113 and Glu116 each coordinate Mg(2+). Residue Glu116 is part of the active site. Residues 154–224 (DPKTRLQEFL…AELALEQLTN (71 aa)) enclose the DRBM domain.

This sequence belongs to the ribonuclease III family. In terms of assembly, homodimer. Mg(2+) serves as cofactor.

The protein localises to the cytoplasm. It carries out the reaction Endonucleolytic cleavage to 5'-phosphomonoester.. Digests double-stranded RNA. Involved in the processing of primary rRNA transcript to yield the immediate precursors to the large and small rRNAs (23S and 16S). Processes some mRNAs, and tRNAs when they are encoded in the rRNA operon. Processes pre-crRNA and tracrRNA of type II CRISPR loci if present in the organism. This Vibrio vulnificus (strain YJ016) protein is Ribonuclease 3.